Here is a 179-residue protein sequence, read N- to C-terminus: Ribosome maturation factor RimM (179 aa).

Residues 102-175 (VEMWWDRDLV…RIVVDPPPGL (74 aa)) form the PRC barrel domain.

The protein belongs to the RimM family. Binds ribosomal protein uS19.

The protein resides in the cytoplasm. Its function is as follows. An accessory protein needed during the final step in the assembly of 30S ribosomal subunit, possibly for assembly of the head region. Essential for efficient processing of 16S rRNA. May be needed both before and after RbfA during the maturation of 16S rRNA. It has affinity for free ribosomal 30S subunits but not for 70S ribosomes. The polypeptide is Ribosome maturation factor RimM (Frankia casuarinae (strain DSM 45818 / CECT 9043 / HFP020203 / CcI3)).